Here is a 230-residue protein sequence, read N- to C-terminus: 2-phytyl-1,4-naphtoquinone methyltransferase (230 aa).

It belongs to the class I-like SAM-binding methyltransferase superfamily. MenG/UbiE family.

The enzyme catalyses demethylphylloquinol + S-adenosyl-L-methionine = phylloquinol + S-adenosyl-L-homocysteine + H(+). It participates in cofactor biosynthesis; phylloquinone biosynthesis. Functionally, methyltransferase required for the conversion of 2-phytyl-1,4-beta-naphthoquinol to phylloquinol. In Nostoc punctiforme (strain ATCC 29133 / PCC 73102), this protein is 2-phytyl-1,4-naphtoquinone methyltransferase.